A 310-amino-acid chain; its full sequence is Vomeronasal type-1 receptor 40 (310 aa).

Topologically, residues 1–20 (MNKANMLRTDKDMQIILFSE) are extracellular. The chain crosses the membrane as a helical span at residues 21-41 (VSVGISANSILFIAHVCMILG). At 42–50 (ENRPKPIDL) the chain is on the cytoplasmic side. The chain crosses the membrane as a helical span at residues 51 to 71 (YIAFLSLTQLMLLITMGLIAV). Topologically, residues 72 to 93 (DMFLSQGIWDSTTCQSLIYLHR) are extracellular. Residues cysteine 85 and cysteine 172 are joined by a disulfide bond. The chain crosses the membrane as a helical span at residues 94–114 (LLRGLSLCATCLLNILWTITL). The Cytoplasmic segment spans residues 115–134 (SSRSFCSTKFKHKSPHHISG). Residues 135–155 (AFIFFCVLYMSFSSHLFISII) form a helical membrane-spanning segment. Residues 156-190 (ATHNLTSENFIYVTQSCSLLPLSYSRTSMFSAPMA) lie on the Extracellular side of the membrane. A glycan (N-linked (GlcNAc...) asparagine) is linked at asparagine 159. A helical transmembrane segment spans residues 191–211 (IREAFLVSLMALSSGYMVALL). Topologically, residues 212 to 238 (WRHKKQAQHLHSTSLSSKASPEQRATR) are cytoplasmic. The chain crosses the membrane as a helical span at residues 239–259 (TILLLMSFFVVLYILENAVFY). At 260–268 (SRIKFKDGS) the chain is on the extracellular side. The helical transmembrane segment at 269 to 289 (ILYCVQIILCHSYATVNPFVF) threads the bilayer. The Cytoplasmic portion of the chain corresponds to 290-310 (ICTEKHIIKFWESKCGRIVNI).

Belongs to the G-protein coupled receptor 1 family.

The protein resides in the cell membrane. Functionally, putative pheromone receptor implicated in the regulation of social and reproductive behavior. The chain is Vomeronasal type-1 receptor 40 (Vmn1r40) from Mus musculus (Mouse).